We begin with the raw amino-acid sequence, 474 residues long: Protein FAM161A (474 aa).

Disordered regions lie at residues serine 78–isoleucine 126, glutamine 185–glutamate 210, and arginine 308–leucine 364. Residues arginine 188–alanine 250 adopt a coiled-coil conformation. A required for interaction with CFAP418 region spans residues lysine 274 to glutamine 454. Positions leucine 325–threonine 335 are enriched in polar residues. Residues lysine 397 and lysine 413 each participate in a glycyl lysine isopeptide (Lys-Gly) (interchain with G-Cter in SUMO2) cross-link. The tract at residues leucine 412–arginine 474 is disordered. A compositionally biased stretch (basic residues) spans proline 422 to alanine 431. Residues arginine 450–alanine 468 are compositionally biased toward basic and acidic residues.

The protein belongs to the FAM161 family. As to quaternary structure, interacts (via central region) with CFAP418 (via N-terminus); the interaction is direct. Interacts (via C-terminus) with microtubules. Interacts with LCA5. Interacts with CEP290. Interacts with SDCCAG8. Interacts with FAM161B. Interacts with POC1B. Interacts with CEP78. Forms a microtubule-associated complex with POC5, CETN2 and POC1B. Interacts with CCDC15. Expressed in the retina and kidney.

It localises to the cytoplasm. It is found in the cytoskeleton. The protein resides in the cilium basal body. Its subcellular location is the cell projection. The protein localises to the cilium. It localises to the microtubule organizing center. It is found in the centrosome. The protein resides in the centriole. Functionally, involved in ciliogenesis. The sequence is that of Protein FAM161A from Rattus norvegicus (Rat).